A 70-amino-acid polypeptide reads, in one-letter code: DNA-directed RNA polymerase subunit omega (70 aa).

It belongs to the RNA polymerase subunit omega family. The RNAP catalytic core consists of 2 alpha, 1 beta, 1 beta' and 1 omega subunit. When a sigma factor is associated with the core the holoenzyme is formed, which can initiate transcription.

It carries out the reaction RNA(n) + a ribonucleoside 5'-triphosphate = RNA(n+1) + diphosphate. Promotes RNA polymerase assembly. Latches the N- and C-terminal regions of the beta' subunit thereby facilitating its interaction with the beta and alpha subunits. In Staphylococcus saprophyticus subsp. saprophyticus (strain ATCC 15305 / DSM 20229 / NCIMB 8711 / NCTC 7292 / S-41), this protein is DNA-directed RNA polymerase subunit omega.